Reading from the N-terminus, the 961-residue chain is SH3 domain-binding protein 4 (961 aa).

Residues 55-114 (GNAKEVIAIKDYCPNNFTTLKFSKGDHLYVLDTSGGEWWYAHNTTEMGYIPSSYVQPLNY) enclose the SH3 1 domain. Phosphoserine occurs at positions 131, 244, 249, 277, and 294. The 138-residue stretch at 315–452 (TNIVCKLDSS…LEPCMYLAIV (138 aa)) folds into the ZU5 domain. Serine 635 bears the Phosphoserine mark. One can recognise an SH3 2 domain in the interval 652–722 (SSLKFGKLLK…HTKNVLVVGK (71 aa)).

In terms of assembly, homodimer or homooligomer. Interacts with DNM2, EPS15, clathrin, the adapter protein complex 2/AP-2 and TFRC. Interacts with the Rag GTPases RRAGA, RRAGB, RRAGC and RRAGD; the interaction is most probably direct, preferentially occurs with their inactive GDP-bound form and is negatively regulated by amino acids. In terms of processing, phosphorylated upon EGF stimulation. Phosphorylation prevents interaction with DNM2.

The protein localises to the membrane. Its subcellular location is the clathrin-coated pit. It localises to the cytoplasmic vesicle. The protein resides in the clathrin-coated vesicle. It is found in the nucleus. May function in transferrin receptor internalization at the plasma membrane through a cargo-specific control of clathrin-mediated endocytosis. Alternatively, may act as a negative regulator of the amino acid-induced TOR signaling by inhibiting the formation of active Rag GTPase complexes. Preferentially binds inactive Rag GTPase complexes and prevents their interaction with the mTORC1 complex inhibiting its relocalization to lysosomes and its activation. Thereby, may indirectly regulate cell growth, proliferation and autophagy. The protein is SH3 domain-binding protein 4 (Sh3bp4) of Rattus norvegicus (Rat).